A 267-amino-acid polypeptide reads, in one-letter code: Proteasome assembly chaperone 2 (267 aa).

The protein belongs to the PSMG2 family. In terms of assembly, component of the 20S proteasome chaperone. Forms a heterodimer with PBA1 that binds to proteasome precursors.

The protein localises to the cytoplasm. Its function is as follows. Involved in 20S proteasome assembly. Required for maximal proteasome activity. Affects the chymotrypsin-like activity of the proteasome. Can be degraded by the proteasome. Involved in the endoplasmic reticulum-associated degradation (ERAD). The polypeptide is Proteasome assembly chaperone 2 (ADD66) (Saccharomyces cerevisiae (strain ATCC 204508 / S288c) (Baker's yeast)).